The chain runs to 439 residues: UDP-N-acetylglucosamine--peptide N-acetylglucosaminyltransferase stabilizing protein GtfB (439 aa).

This sequence belongs to the GtfB family. Interacts with glycosyltransferase GtfA (Gtf2); probably forms a heterotetramer with 2 subunits each of GtfA and GtfB. Part of the accessory SecA2/SecY2 protein translocation apparatus.

The protein localises to the cell membrane. The protein operates within protein modification; protein glycosylation. Functionally, required for the polymorphic O-glycosylation of the serine-rich repeat protein Fap1. A stabilizing protein that is part of the accessory SecA2/SecY2 system specifically required to export Fap1, a serine-rich fimbrial adhesin encoded upstream in the same operon. The GtfA-GtfB (Gtf1-Gtf2 in this bacteria) complex adds GlcNAc from UDP-GlcNAc to Fap1, attaching the first sugar residue. Cannot use not UDP-Glc as substrate. Stabilizes the glycosylation activity of GtfA, causing it to partially localize to the cellular membrane where it is more protease resistant. The polypeptide is UDP-N-acetylglucosamine--peptide N-acetylglucosaminyltransferase stabilizing protein GtfB (Streptococcus parasanguinis).